Here is a 962-residue protein sequence, read N- to C-terminus: Leucine--tRNA ligase (962 aa).

The 'HIGH' region signature appears at 41-51 (PYLNGNLHAGH). The short motif at 631-635 (KMSKS) is the 'KMSKS' region element. Lysine 634 contacts ATP.

This sequence belongs to the class-I aminoacyl-tRNA synthetase family.

The protein localises to the cytoplasm. It catalyses the reaction tRNA(Leu) + L-leucine + ATP = L-leucyl-tRNA(Leu) + AMP + diphosphate. This Methanococcoides burtonii (strain DSM 6242 / NBRC 107633 / OCM 468 / ACE-M) protein is Leucine--tRNA ligase.